A 175-amino-acid chain; its full sequence is Large ribosomal subunit protein uL10 (175 aa).

Belongs to the universal ribosomal protein uL10 family. As to quaternary structure, part of the ribosomal stalk of the 50S ribosomal subunit. The N-terminus interacts with L11 and the large rRNA to form the base of the stalk. The C-terminus forms an elongated spine to which L12 dimers bind in a sequential fashion forming a multimeric L10(L12)X complex.

Forms part of the ribosomal stalk, playing a central role in the interaction of the ribosome with GTP-bound translation factors. This Mycobacterium sp. (strain KMS) protein is Large ribosomal subunit protein uL10.